The following is a 343-amino-acid chain: Allergin-1 (343 aa).

A signal peptide spans 1-19 (MWSHLNRLLFWSIFSSVTC). The Extracellular portion of the chain corresponds to 20–227 (RKAVLDCEAM…GGDSCPFCLK (208 aa)). Ig-like C2-type domains follow at residues 35 to 118 (PSPC…RDFS) and 128 to 213 (PVLN…HPVT). N-linked (GlcNAc...) asparagine glycosylation is found at N51, N60, N89, N151, N157, and N182. Disulfide bonds link C56–C103 and C147–C196. The helical transmembrane segment at 228–248 (LLLPGLLLLLVVIILILAFWV) threads the bilayer. At 249–343 (LPKYKTRKAM…SGYVYSELNF (95 aa)) the chain is on the cytoplasmic side. 2 short sequence motifs (ITIM motif) span residues 311 to 316 (LQYATP) and 336 to 341 (YVYSEL). Residues Y313 and Y338 each carry the phosphotyrosine modification.

Monomer. Interacts (tyrosine-phosphorylated) with PTPN6, PTPN11 and INPP5D. N-glycosylated. In terms of tissue distribution, expressed in myeloid cells (dendritic cells, macrophages and neutrophils, weak expression on B-cells but not in T-cells or natural killer cells), peripheral blood basophils and mast cells (at protein level).

The protein resides in the cell membrane. Functionally, immunoglobulin-like receptor which plays an inhibitory role in degranulation of mast cells. Negatively regulates IgE-mediated mast cell activation and suppresses the type I immediate hypersensitivity reaction. This is Allergin-1 (MILR1) from Homo sapiens (Human).